A 167-amino-acid chain; its full sequence is MLLQKTLCIVKPDGVRRGLIGDVVSRFERVGLKMVAAKMLIVDESLAKKHYLYDDIVFRHSEAVWNSLIKFISNSPVFTFVVEGVESIEVVRKLCGATEPKLAIPGTIRGDFSYHSFKYSNEKGFSIYNVIHASANEADAMREIPIWFKDNEILNYKRDDECEHYYC.

ATP contacts are provided by Lys-11, Arg-92, Thr-98, Arg-109, and Asn-129. His-132 (pros-phosphohistidine intermediate) is an active-site residue.

Belongs to the NDK family. Homotetramer. Mg(2+) serves as cofactor.

It localises to the cytoplasm. It carries out the reaction a 2'-deoxyribonucleoside 5'-diphosphate + ATP = a 2'-deoxyribonucleoside 5'-triphosphate + ADP. It catalyses the reaction a ribonucleoside 5'-diphosphate + ATP = a ribonucleoside 5'-triphosphate + ADP. Major role in the synthesis of nucleoside triphosphates other than ATP. The ATP gamma phosphate is transferred to the NDP beta phosphate via a ping-pong mechanism, using a phosphorylated active-site intermediate. This chain is Nucleoside diphosphate kinase (ndk), found in Borreliella burgdorferi (strain ATCC 35210 / DSM 4680 / CIP 102532 / B31) (Borrelia burgdorferi).